We begin with the raw amino-acid sequence, 697 residues long: DNA ligase (697 aa).

Residues 36-40 (DAEYD), 85-86 (SL), and E123 each bind NAD(+). The active-site N6-AMP-lysine intermediate is K125. NAD(+) contacts are provided by R146, E182, K320, and K344. Zn(2+) is bound by residues C438, C441, C456, and C462. The 79-residue stretch at 619-697 (PQGNTLAGKT…EDGLKALLGV (79 aa)) folds into the BRCT domain.

This sequence belongs to the NAD-dependent DNA ligase family. LigA subfamily. Requires Mg(2+) as cofactor. It depends on Mn(2+) as a cofactor.

The catalysed reaction is NAD(+) + (deoxyribonucleotide)n-3'-hydroxyl + 5'-phospho-(deoxyribonucleotide)m = (deoxyribonucleotide)n+m + AMP + beta-nicotinamide D-nucleotide.. Functionally, DNA ligase that catalyzes the formation of phosphodiester linkages between 5'-phosphoryl and 3'-hydroxyl groups in double-stranded DNA using NAD as a coenzyme and as the energy source for the reaction. It is essential for DNA replication and repair of damaged DNA. This is DNA ligase from Bordetella petrii (strain ATCC BAA-461 / DSM 12804 / CCUG 43448).